An 89-amino-acid chain; its full sequence is MTLLASISSIGNVKSISKSNNFSSLSNSSLQSSNSIQCGGCGGGSPLIGTVGNLVGGVLVGTGIIVGTVVGTVNGVVGGLLSGPNCGCH.

Belongs to the hssA/B family.

The chain is HssA/B-like protein 16 (hssl16) from Dictyostelium discoideum (Social amoeba).